The primary structure comprises 349 residues: Hydroxymethylglutaryl-CoA synthase (349 aa).

Residues Asp-29 and Ala-30 each contribute to the (3S)-3-hydroxy-3-methylglutaryl-CoA site. Residue Glu-81 is the Proton donor/acceptor of the active site. Positions 113 and 154 each coordinate (3S)-3-hydroxy-3-methylglutaryl-CoA. Catalysis depends on Cys-113, which acts as the Acyl-thioester intermediate. CoA is bound at residue Arg-202. Positions 204 and 237 each coordinate (3S)-3-hydroxy-3-methylglutaryl-CoA. The active-site Proton donor/acceptor is the His-237. Residue Lys-242 participates in CoA binding. Residues Lys-246, Asn-269, and Ser-299 each coordinate (3S)-3-hydroxy-3-methylglutaryl-CoA.

It belongs to the thiolase-like superfamily. Archaeal HMG-CoA synthase family. Interacts with acetoacetyl-CoA thiolase that catalyzes the precedent step in the pathway and with a DUF35 protein. The acetoacetyl-CoA thiolase/HMG-CoA synthase complex channels the intermediate via a fused CoA-binding site, which allows for efficient coupling of the endergonic thiolase reaction with the exergonic HMGCS reaction.

It catalyses the reaction acetoacetyl-CoA + acetyl-CoA + H2O = (3S)-3-hydroxy-3-methylglutaryl-CoA + CoA + H(+). It participates in metabolic intermediate biosynthesis; (R)-mevalonate biosynthesis; (R)-mevalonate from acetyl-CoA: step 2/3. In terms of biological role, catalyzes the condensation of acetyl-CoA with acetoacetyl-CoA to form 3-hydroxy-3-methylglutaryl-CoA (HMG-CoA). Functions in the mevalonate (MVA) pathway leading to isopentenyl diphosphate (IPP), a key precursor for the biosynthesis of isoprenoid compounds that are building blocks of archaeal membrane lipids. In Methanosarcina acetivorans (strain ATCC 35395 / DSM 2834 / JCM 12185 / C2A), this protein is Hydroxymethylglutaryl-CoA synthase.